The primary structure comprises 291 residues: Pyridoxal 5'-phosphate synthase subunit PdxS (291 aa).

Position 23 (D23) interacts with D-ribose 5-phosphate. The Schiff-base intermediate with D-ribose 5-phosphate role is filled by K80. A D-ribose 5-phosphate-binding site is contributed by G152. R164 contributes to the D-glyceraldehyde 3-phosphate binding site. D-ribose 5-phosphate contacts are provided by residues G213 and 234–235; that span reads GS.

The protein belongs to the PdxS/SNZ family. As to quaternary structure, in the presence of PdxT, forms a dodecamer of heterodimers.

The enzyme catalyses aldehydo-D-ribose 5-phosphate + D-glyceraldehyde 3-phosphate + L-glutamine = pyridoxal 5'-phosphate + L-glutamate + phosphate + 3 H2O + H(+). Its pathway is cofactor biosynthesis; pyridoxal 5'-phosphate biosynthesis. Catalyzes the formation of pyridoxal 5'-phosphate from ribose 5-phosphate (RBP), glyceraldehyde 3-phosphate (G3P) and ammonia. The ammonia is provided by the PdxT subunit. Can also use ribulose 5-phosphate and dihydroxyacetone phosphate as substrates, resulting from enzyme-catalyzed isomerization of RBP and G3P, respectively. In Bifidobacterium adolescentis (strain ATCC 15703 / DSM 20083 / NCTC 11814 / E194a), this protein is Pyridoxal 5'-phosphate synthase subunit PdxS.